The primary structure comprises 259 residues: Thiazole synthase (259 aa).

The active-site Schiff-base intermediate with DXP is Lys-98. Residues Gly-159, 185-186 (AG), and 207-208 (NS) each bind 1-deoxy-D-xylulose 5-phosphate.

Belongs to the ThiG family. As to quaternary structure, homotetramer. Forms heterodimers with either ThiH or ThiS.

Its subcellular location is the cytoplasm. The catalysed reaction is [ThiS sulfur-carrier protein]-C-terminal-Gly-aminoethanethioate + 2-iminoacetate + 1-deoxy-D-xylulose 5-phosphate = [ThiS sulfur-carrier protein]-C-terminal Gly-Gly + 2-[(2R,5Z)-2-carboxy-4-methylthiazol-5(2H)-ylidene]ethyl phosphate + 2 H2O + H(+). The protein operates within cofactor biosynthesis; thiamine diphosphate biosynthesis. In terms of biological role, catalyzes the rearrangement of 1-deoxy-D-xylulose 5-phosphate (DXP) to produce the thiazole phosphate moiety of thiamine. Sulfur is provided by the thiocarboxylate moiety of the carrier protein ThiS. In vitro, sulfur can be provided by H(2)S. In Chlorobium limicola (strain DSM 245 / NBRC 103803 / 6330), this protein is Thiazole synthase.